Reading from the N-terminus, the 329-residue chain is Protein SPATA31F3 (329 aa).

A helical membrane pass occupies residues Val-11–Val-31. Positions Ser-58–Gln-85 form a coiled coil. Disordered regions lie at residues Ala-149 to Thr-184, Gln-201 to Thr-250, and Lys-288 to Ile-329. Ser-152 and Ser-153 each carry phosphoserine. 2 stretches are compositionally biased toward polar residues: residues Glu-154–Thr-184 and Gln-201–Asp-223. Positions Gln-232–Ala-242 are enriched in basic residues. Residues Glu-293–Ala-320 are compositionally biased toward basic and acidic residues.

It belongs to the SPATA31 family.

It is found in the membrane. The sequence is that of Protein SPATA31F3 from Rattus norvegicus (Rat).